Consider the following 83-residue polypeptide: MYB-like transcription factor ETC1 (83 aa).

One can recognise a Myb-like domain in the interval 35 to 72 (AQEEEDLICRMYKLVGERWDLIAGRIPGRTAEEIERFW).

Expressed in developing trichomes and non-root hair cells.

It localises to the nucleus. Its function is as follows. MYB-type transcription factor involved in epidermal cell fate specification. Acts as a negative regulator of trichome development, by mediating lateral inhibition. Promotes the formation of hair developing cells in H position in root epidermis, probably by inhibiting non-hair cell formation. The sequence is that of MYB-like transcription factor ETC1 (ETC1) from Arabidopsis thaliana (Mouse-ear cress).